The following is a 126-amino-acid chain: C-type natriuretic peptide (126 aa).

Positions 1–23 (MHLSQLLACALLLSLLSLRPSEA) are cleaved as a signal peptide. The segment at 20–71 (PSEAKPGAPPKVPRTPPGEEVAEPQAAGGGQKKGDKTPGGGGANLKDDRSRL) is disordered. Positions 24–73 (KPGAPPKVPRTPPGEEVAEPQAAGGGQKKGDKTPGGGGANLKDDRSRLLR) are excised as a propeptide. The span at 26 to 35 (GAPPKVPRTP) shows a compositional bias: pro residues. Residues 46 to 62 (AGGGQKKGDKTPGGGGA) are compositionally biased toward gly residues. Cys-110 and Cys-126 are joined by a disulfide.

It belongs to the natriuretic peptide family. Degraded by IDE (in vitro).

It is found in the secreted. Hormone which plays a role in endochondral ossification through regulation of cartilaginous growth plate chondrocytes proliferation and differentiation. May also be vasoactive and natriuretic. Acts by specifically binding and stimulating NPR2 to produce cGMP. Binds the clearance receptor NPR3. This Ovis aries (Sheep) protein is C-type natriuretic peptide (NPPC).